A 354-amino-acid polypeptide reads, in one-letter code: Uroporphyrinogen decarboxylase (354 aa).

Substrate contacts are provided by residues 27–31 (RQAGR), Asp77, Tyr154, Thr209, and His327.

Belongs to the uroporphyrinogen decarboxylase family. As to quaternary structure, homodimer.

It is found in the cytoplasm. The enzyme catalyses uroporphyrinogen III + 4 H(+) = coproporphyrinogen III + 4 CO2. It functions in the pathway porphyrin-containing compound metabolism; protoporphyrin-IX biosynthesis; coproporphyrinogen-III from 5-aminolevulinate: step 4/4. In terms of biological role, catalyzes the decarboxylation of four acetate groups of uroporphyrinogen-III to yield coproporphyrinogen-III. This chain is Uroporphyrinogen decarboxylase, found in Escherichia coli (strain 55989 / EAEC).